We begin with the raw amino-acid sequence, 29 residues long: U-limacoditoxin(12)-Dv72 (29 aa).

The N-terminal stretch at 1–15 is a signal peptide; that stretch reads MNFGMLKLLTVLIIC. Asparagine 27 is subject to Asparagine amide.

This sequence belongs to the limacoditoxin-12 family. As to expression, expressed by the venom secretory cell of the spine. The spine is a cuticular structure containing a single large nucleated venom-secreting cell at its base. It is an independent unit capable of producing, storing and injecting venom. On the back of D.vulnerans caterpillars, spines are grouped together by 50 to 100 to form scoli, of which there are eight in D.vulnerans.

It is found in the secreted. In terms of biological role, probable toxin. Does not show insecticidal, antimicrobial and antiparasitic activities. Does not induce increase in intracellular calcium in mouse DRG neurons, suggesting that it does not induce pain. The protein is U-limacoditoxin(12)-Dv72 of Doratifera vulnerans (Mottled cup moth).